We begin with the raw amino-acid sequence, 335 residues long: Nucleoid-associated protein PputGB1_0980 (335 aa).

It belongs to the YejK family.

It is found in the cytoplasm. The protein localises to the nucleoid. This is Nucleoid-associated protein PputGB1_0980 from Pseudomonas putida (strain GB-1).